The primary structure comprises 276 residues: MLIDFSKMHGLGNDFMVVDGVTQKVFFSNEVIKKLADRHFGIGFDQLLLVEPPYDPELDFHYRIFNADGSEVEQCGNGARCFARFVRLKGLINRDRIAVSTARGRIVLQLEGENQVTVNMGVPQFEPGKIPFRAQKAEKTYLLRAQEHTVMCGAVSMGNPHCVIEVPSVADAPVATLGPIMERHERFPERVNVGFMEMVNASEIKLRVFERGVGETLACGTGACAAVVVGISQGKLKERVTVTLPGGKLTIAWKGPGQPVYMTGPAEHVFDGQIEL.

Positions 13, 46, and 66 each coordinate substrate. Cys-75 serves as the catalytic Proton donor. Residues 76–77 (GN), Asn-159, Asn-192, and 210–211 (ER) contribute to the substrate site. Catalysis depends on Cys-219, which acts as the Proton acceptor. 220 to 221 (GT) contacts substrate.

It belongs to the diaminopimelate epimerase family. As to quaternary structure, homodimer.

It is found in the cytoplasm. The catalysed reaction is (2S,6S)-2,6-diaminopimelate = meso-2,6-diaminopimelate. It functions in the pathway amino-acid biosynthesis; L-lysine biosynthesis via DAP pathway; DL-2,6-diaminopimelate from LL-2,6-diaminopimelate: step 1/1. In terms of biological role, catalyzes the stereoinversion of LL-2,6-diaminopimelate (L,L-DAP) to meso-diaminopimelate (meso-DAP), a precursor of L-lysine and an essential component of the bacterial peptidoglycan. The protein is Diaminopimelate epimerase of Aeromonas hydrophila subsp. hydrophila (strain ATCC 7966 / DSM 30187 / BCRC 13018 / CCUG 14551 / JCM 1027 / KCTC 2358 / NCIMB 9240 / NCTC 8049).